The primary structure comprises 106 residues: Large ribosomal subunit protein uL23 (106 aa).

Belongs to the universal ribosomal protein uL23 family. As to quaternary structure, part of the 50S ribosomal subunit. Contacts protein L29, and trigger factor when it is bound to the ribosome.

Functionally, one of the early assembly proteins it binds 23S rRNA. One of the proteins that surrounds the polypeptide exit tunnel on the outside of the ribosome. Forms the main docking site for trigger factor binding to the ribosome. This is Large ribosomal subunit protein uL23 from Neisseria meningitidis serogroup A / serotype 4A (strain DSM 15465 / Z2491).